Reading from the N-terminus, the 368-residue chain is DNA-directed RNA polymerase subunit alpha (368 aa).

Positions 1-231 (MLWKGFQKPK…DHMNIFINFE (231 aa)) are alpha N-terminal domain (alpha-NTD). Residues 243–368 (KPEIRNENLN…GFGGDNNPGF (126 aa)) form an alpha C-terminal domain (alpha-CTD) region.

This sequence belongs to the RNA polymerase alpha chain family. In terms of assembly, homodimer. The RNAP catalytic core consists of 2 alpha, 1 beta, 1 beta' and 1 omega subunit. When a sigma factor is associated with the core the holoenzyme is formed, which can initiate transcription.

The enzyme catalyses RNA(n) + a ribonucleoside 5'-triphosphate = RNA(n+1) + diphosphate. DNA-dependent RNA polymerase catalyzes the transcription of DNA into RNA using the four ribonucleoside triphosphates as substrates. This is DNA-directed RNA polymerase subunit alpha from Koribacter versatilis (strain Ellin345).